The primary structure comprises 340 residues: 4-hydroxythreonine-4-phosphate dehydrogenase (340 aa).

Substrate-binding residues include His141 and Thr142. A divalent metal cation-binding residues include His171, His216, and His271. Substrate is bound by residues Lys279, Asn288, and Arg297.

Belongs to the PdxA family. In terms of assembly, homodimer. Zn(2+) is required as a cofactor. Mg(2+) serves as cofactor. Requires Co(2+) as cofactor.

It is found in the cytoplasm. It carries out the reaction 4-(phosphooxy)-L-threonine + NAD(+) = 3-amino-2-oxopropyl phosphate + CO2 + NADH. It participates in cofactor biosynthesis; pyridoxine 5'-phosphate biosynthesis; pyridoxine 5'-phosphate from D-erythrose 4-phosphate: step 4/5. Its function is as follows. Catalyzes the NAD(P)-dependent oxidation of 4-(phosphooxy)-L-threonine (HTP) into 2-amino-3-oxo-4-(phosphooxy)butyric acid which spontaneously decarboxylates to form 3-amino-2-oxopropyl phosphate (AHAP). The protein is 4-hydroxythreonine-4-phosphate dehydrogenase of Desulforapulum autotrophicum (strain ATCC 43914 / DSM 3382 / VKM B-1955 / HRM2) (Desulfobacterium autotrophicum).